The following is a 551-amino-acid chain: Xylulose kinase (551 aa).

Substrate-binding residues include H114, R185, D295, and N296. Residues W370, 456–457 (GA), and N460 contribute to the ATP site.

The protein belongs to the FGGY kinase family. Monomer.

It carries out the reaction D-xylulose + ATP = D-xylulose 5-phosphate + ADP + H(+). Phosphorylates D-xylulose to produce D-xylulose 5-phosphate, a molecule that may play an important role in the regulation of glucose metabolism and lipogenesis. The chain is Xylulose kinase (Xylb) from Mus musculus (Mouse).